A 128-amino-acid polypeptide reads, in one-letter code: Aspartate 1-decarboxylase (128 aa).

Residue serine 25 is the Schiff-base intermediate with substrate; via pyruvic acid of the active site. At serine 25 the chain carries Pyruvic acid (Ser). Residue threonine 57 participates in substrate binding. Tyrosine 58 acts as the Proton donor in catalysis. 73–75 (GAA) is a substrate binding site.

This sequence belongs to the PanD family. As to quaternary structure, heterooctamer of four alpha and four beta subunits. Pyruvate is required as a cofactor. Post-translationally, is synthesized initially as an inactive proenzyme, which is activated by self-cleavage at a specific serine bond to produce a beta-subunit with a hydroxyl group at its C-terminus and an alpha-subunit with a pyruvoyl group at its N-terminus.

Its subcellular location is the cytoplasm. The enzyme catalyses L-aspartate + H(+) = beta-alanine + CO2. Its pathway is cofactor biosynthesis; (R)-pantothenate biosynthesis; beta-alanine from L-aspartate: step 1/1. In terms of biological role, catalyzes the pyruvoyl-dependent decarboxylation of aspartate to produce beta-alanine. This chain is Aspartate 1-decarboxylase, found in Chlorobium phaeovibrioides (strain DSM 265 / 1930) (Prosthecochloris vibrioformis (strain DSM 265)).